Consider the following 904-residue polypeptide: Anoctamin-5 (904 aa).

At 1–290 (MVEQEGLTAK…HLIRNYFGEK (290 aa)) the chain is on the cytoplasmic side. The helical transmembrane segment at 291-311 (IGIYFVFLGYYTEMLLFAALV) threads the bilayer. Over 312–371 (GLACFIYGLLSMENNRTSTEICDPDIGGQMIMCPLCDEVCDYWRLNTTCLHSKFSHLFDN) the chain is Extracellular. Residues N326, N357, and N371 are each glycosylated (N-linked (GlcNAc...) asparagine). Residues 372–392 (ESTVFFALFMGIWVTLFLEFW) form a helical membrane-spanning segment. The Cytoplasmic portion of the chain corresponds to 393–453 (KQRQARLEYE…CHRIPWYFVS (61 aa)). A helical transmembrane segment spans residues 454 to 474 (GTTVTFGMALLLSSMVSILIY). Residues 475 to 502 (RLSVFATFASFMESEATLQSVKSFFTPQ) lie on the Extracellular side of the membrane. Residues 503 to 523 (LATALSGSCLNCIVILILNFF) form a helical membrane-spanning segment. The Cytoplasmic portion of the chain corresponds to 524–548 (YEKISAWITKMEIPRTHQEYESSLT). A helical membrane pass occupies residues 549–569 (LKMFLFQFVNYYSSCFYVAFF). The Extracellular portion of the chain corresponds to 570–667 (KGKFVGYPGS…RGLFYEYLET (98 aa)). The chain crosses the membrane as a helical span at residues 668–688 (VIQFGFATLFVASFPLAPLFA). Residues 689–723 (LMNNIMGIRVDAWKLTTQYRRPVAAKAHSIGVWQD) lie on the Cytoplasmic side of the membrane. Residues 724–744 (ILFGMAIVSVATNAFIVSFTS) form a helical membrane-spanning segment. Over 745–825 (DIIPRLVYFY…FWHVLAAKMT (81 aa)) the chain is Extracellular. N-linked (GlcNAc...) asparagine glycans are attached at residues N759, N769, and N782. The chain crosses the membrane as a helical span at residues 826-846 (FIIVMEHVVFLFKFLLAWLIP). Over 847–904 (DVPKDVVEKIKREKLMTIKIIHDFELNKLKENLDVEYGNIMKNVLVDEDNSLKAKTTV) the chain is Cytoplasmic.

It belongs to the anoctamin family. As to expression, highly expressed in skeletal muscle, bone tissues and thyroid gland.

It localises to the endoplasmic reticulum membrane. Its subcellular location is the cell membrane. Plays a role in plasma membrane repair in a process involving annexins. Does not exhibit calcium-activated chloride channel (CaCC) activity. This is Anoctamin-5 (Ano5) from Mus musculus (Mouse).